Consider the following 505-residue polypeptide: Membrane-bound O-acyltransferase GUP1 (505 aa).

Over 1-217 the chain is Extracellular; it reads MFKAAMDASN…VAPIPLTDYN (217 aa). The chain crosses the membrane as a helical span at residues 218–238; that stretch reads FVNYMAYITYAPLFIAGPIIT. Over 239–266 the chain is Cytoplasmic; sequence FNDYIYQSDYKAMSSVKDYKRTFIYFLR. Residues 267 to 287 traverse the membrane as a helical segment; it reads FAFCILVMEFLLHFMYVVAVS. Residues 288–296 lie on the Extracellular side of the membrane; the sequence is KTKAWEGDT. Residues 297 to 317 form a helical membrane-spanning segment; it reads PFQLSMLGLFNLNIIWLKLLI. The Cytoplasmic portion of the chain corresponds to 318–377; it reads PWRLFRLWSLIDGIDPPENMIRCMDNNFSTLAFWRAWHRSYNRWIIRYIYIPLGGGGKYR. 2 helical membrane passes run 378-398 and 399-419; these read ILNS…ELKL and LMWG…TAIF. His392 is a catalytic residue. Over 420-430 the chain is Cytoplasmic; that stretch reads KNYQHEPWYRH. The chain crosses the membrane as a helical span at residues 431–451; the sequence is VCALGAVINIWMMMLANLFGF. Residues 452-464 lie on the Extracellular side of the membrane; it reads CMGKDGTMSLIKT. The chain crosses the membrane as a helical span at residues 465-485; the sequence is LFTTAVGLRFLFLSLGALFVG. Over 486 to 505 the chain is Cytoplasmic; the sequence is SQVMFELREAEKRRGVNVKC.

This sequence belongs to the membrane-bound acyltransferase family.

The protein resides in the cell membrane. It localises to the endoplasmic reticulum membrane. It is found in the mitochondrion membrane. Functionally, membrane-bound O-acyltransferase involved in the remodeling of glycosylphosphatidylinositol (GPI) anchors. Acts only on GPI-anchored proteins, but not on free GPI lipids. Also involved in lipid metabolism, having profound effects on sphingolipid-sterol-ordered domains integrity and assembly. Involved in cell integrity and apoptosis. The chain is Membrane-bound O-acyltransferase GUP1 (GUP1) from Millerozyma farinosa (Yeast).